We begin with the raw amino-acid sequence, 267 residues long: 4-hydroxy-tetrahydrodipicolinate reductase (267 aa).

Residues 8-13 (GAAGRM) and aspartate 34 contribute to the NAD(+) site. Arginine 35 contributes to the NADP(+) binding site. Residues 98–100 (GTT) and 122–125 (AANF) each bind NAD(+). Catalysis depends on histidine 155, which acts as the Proton donor/acceptor. Position 156 (histidine 156) interacts with (S)-2,3,4,5-tetrahydrodipicolinate. Residue lysine 159 is the Proton donor of the active site. 165–166 (GT) lines the (S)-2,3,4,5-tetrahydrodipicolinate pocket.

This sequence belongs to the DapB family.

Its subcellular location is the cytoplasm. The enzyme catalyses (S)-2,3,4,5-tetrahydrodipicolinate + NAD(+) + H2O = (2S,4S)-4-hydroxy-2,3,4,5-tetrahydrodipicolinate + NADH + H(+). The catalysed reaction is (S)-2,3,4,5-tetrahydrodipicolinate + NADP(+) + H2O = (2S,4S)-4-hydroxy-2,3,4,5-tetrahydrodipicolinate + NADPH + H(+). Its pathway is amino-acid biosynthesis; L-lysine biosynthesis via DAP pathway; (S)-tetrahydrodipicolinate from L-aspartate: step 4/4. Catalyzes the conversion of 4-hydroxy-tetrahydrodipicolinate (HTPA) to tetrahydrodipicolinate. This chain is 4-hydroxy-tetrahydrodipicolinate reductase, found in Pseudomonas amygdali pv. tabaci (Pseudomonas syringae pv. tabaci).